Consider the following 200-residue polypeptide: MGGALIVLAMPKTIQFIKSAVLEKDFPVHKKAEVAIAGRSNAGKSSFINALTKNKIAKVSSTPGKTRLLNFFELDQSYVMVDMPGYGFAARSGDEMREWHRMIETYLMNREQLRGLLLVMDIRRSWTEDEELLKEFSERRGFPLAVVLTKADKMSRSQMLQAVAKVKKASGLSAVFGVSALKKEGQDAVEDYIYENWIKE.

The EngB-type G domain maps to 30–199 (KKAEVAIAGR…EDYIYENWIK (170 aa)). GTP is bound by residues 38–45 (GRSNAGKS), 64–68 (GKTRL), 82–85 (DMPG), 149–152 (TKAD), and 178–180 (VSA). Mg(2+) contacts are provided by S45 and T66.

It belongs to the TRAFAC class TrmE-Era-EngA-EngB-Septin-like GTPase superfamily. EngB GTPase family. Mg(2+) serves as cofactor.

In terms of biological role, necessary for normal cell division and for the maintenance of normal septation. This Bdellovibrio bacteriovorus (strain ATCC 15356 / DSM 50701 / NCIMB 9529 / HD100) protein is Probable GTP-binding protein EngB.